A 101-amino-acid polypeptide reads, in one-letter code: Feather keratin Cos2-2 (101 aa).

At serine 2 the chain carries N-acetylserine.

It belongs to the avian keratin family. In terms of assembly, the avian keratins (F-ker, S-ker, C-ker and B-ker) are a complex mixture of very similar polypeptides.

The chain is Feather keratin Cos2-2 from Columba livia (Rock dove).